The chain runs to 471 residues: O-acetyltransferase astG (471 aa).

The protein belongs to the fumigaclavine B O-acetyltransferase family. As to quaternary structure, monomer.

It catalyses the reaction dideacetyl astellolide A + acetyl-CoA = 14-deacetyl astellolide A + CoA. It carries out the reaction dideacetyl astellolide B + acetyl-CoA = 14-deacetyl astellolide B + CoA. It functions in the pathway secondary metabolite biosynthesis; terpenoid biosynthesis. In terms of biological role, O-acetyltransferase; part of the gene cluster that mediates the biosynthesis of astellolides, drimane-type sesquiterpene esters that show antimicrobial, anti-inflammatory, and anti-tumor activities. The first step in astellolide biosynthesis is performed by the sesquiterpene cyclase astC that catalyzes the formation of drimanyl pyrophosphate from farnesyl pyrophosphate. Drimanyl pyrophosphate is then dephosphorylated by the sesquiterpene phosphatase astI to produce drimanyl monophosphate which is further dephosphorylated to drim-8-ene-11-ol by atsK. Drim-8-ene-11-ol is converted to confertifolin, probably by the cytochrome P450 monooxygenase astD and/or the dehydrogenase astE. The cytochrome P450 monooxygenases astB, astF and astJ then hydroxylate confertifolin at C6, C14, or C15 to form trihydroxy confertifolin. The nonribosomal peptide synthetase astA catalyzes ester bond formation between trihydroxy contifolin and benzoic acid (BA) or 4-hydroxy benzoic acid (4HBA), leading to the formation of dideacetyl astellolides A and B, respectively. Finally, the O-acetyltransferase astG converts dideacetyl astellolides A and B into deacetyl astellolides A and B. The sequence is that of O-acetyltransferase astG from Aspergillus oryzae (strain ATCC 42149 / RIB 40) (Yellow koji mold).